Reading from the N-terminus, the 130-residue chain is Small ribosomal subunit protein uS11 (130 aa).

Belongs to the universal ribosomal protein uS11 family. In terms of assembly, part of the 30S ribosomal subunit. Interacts with proteins S7 and S18. Binds to IF-3.

Functionally, located on the platform of the 30S subunit, it bridges several disparate RNA helices of the 16S rRNA. Forms part of the Shine-Dalgarno cleft in the 70S ribosome. The chain is Small ribosomal subunit protein uS11 from Prochlorococcus marinus subsp. pastoris (strain CCMP1986 / NIES-2087 / MED4).